The sequence spans 833 residues: MTFYDHTAIEPKWQAFWADNHTFKTGTDASKPKFYALDMFPYPSGAGLHVGHPEGYTATDILSRFKRAQGHNVLHPMGWDAFGLPAEQYAMDTGNDPAEFTAENIANFKRQINALGFSYDWDREVNTTDPNYYKWTQWIFTKLYEKGLAYEAEVPVNWVEELGTAIANEEVLPDGTSERGGYPVVRKPMRQWMLKITAYAERLLEDLEEVDWPESIKDMQRNWIGKSTGANVTFKVKDTDKDFTVFTTRPDTLFGATYAVLAPEHALVDAITTADQAEAVADYKRQASLKSDLARTDLAKEKTGVWTGSYAINPVNGKEMPVWIADYVLASYGTGAIMAVPAHDERDWEFAKQFNLDIIPVLEGGNVEEAAFTEDGLHINSGFLDGLDKASAIAKMVEWLEAEGVGNEKVTYRLRDWLFSRQRYWGEPIPIIHWEDGTSTAVPESELPLVLPVTKDIRPSGTGESPLANVTDWLEVTREDGVKGRRETNTMPQWAGSSWYYLRYIDPHNTEKLADEELLKQWLPVDIYVGGAEHAVLHLLYARFWHKVLYDLGVVPTKEPFQKLFNQGMILGTSYRDSRGALVATDKVEKRDGSFFHVETGEELEQAPAKMSKSLKNVVNPDDVVEQYGADTLRVYEMFMGPLDASIAWSEEGLEGSRKFLDRVYRLITTKEITEENSGALDKVYNETVKAVTEQVDQMKFNTAIAQLMVFVNAANKEDKLFSDYAKGFVQLIAPFAPHLGEELWQALTASGESISYVPWPSYDESKLVENDVEIVVQIKGKVKAKLVVAKDLSREELQEVALANEKVQAEIAGKDIIKVIAVPNKLVNIVIK.

The short motif at 41–52 (PYPSGAGLHVGH) is the 'HIGH' region element. The 'KMSKS' region motif lies at 610–614 (KMSKS). Lys613 lines the ATP pocket.

The protein belongs to the class-I aminoacyl-tRNA synthetase family.

The protein resides in the cytoplasm. The enzyme catalyses tRNA(Leu) + L-leucine + ATP = L-leucyl-tRNA(Leu) + AMP + diphosphate. This Streptococcus pyogenes serotype M2 (strain MGAS10270) protein is Leucine--tRNA ligase.